The chain runs to 105 residues: DNA-directed RNA polymerase subunit omega (105 aa).

It belongs to the RNA polymerase subunit omega family. In terms of assembly, the RNAP catalytic core consists of 2 alpha, 1 beta, 1 beta' and 1 omega subunit. When a sigma factor is associated with the core the holoenzyme is formed, which can initiate transcription.

The catalysed reaction is RNA(n) + a ribonucleoside 5'-triphosphate = RNA(n+1) + diphosphate. In terms of biological role, promotes RNA polymerase assembly. Latches the N- and C-terminal regions of the beta' subunit thereby facilitating its interaction with the beta and alpha subunits. In Streptococcus mutans serotype c (strain ATCC 700610 / UA159), this protein is DNA-directed RNA polymerase subunit omega.